Consider the following 486-residue polypeptide: Amyloid-beta A4 precursor protein-binding family B member 3 (486 aa).

The WW domain maps to 29-61 (TGLPPGWRKIRDAAGTYYWHVPSGSTQWQRPTW). 2 consecutive PID domains span residues 113–280 (EPGA…QVEL) and 285–440 (SQAA…RTSS). A disordered region spans residues 438–460 (TSSMDSPGGPLPPPLLKGGAGGA).

In terms of assembly, interacts with APP (via intracellular domain). Interacts with APLP1 and APLP2 (via intracellular domain).

The protein resides in the cytoplasm. It localises to the nucleus. Its function is as follows. May modulate the internalization of amyloid-beta precursor protein. This is Amyloid-beta A4 precursor protein-binding family B member 3 from Mus musculus (Mouse).